We begin with the raw amino-acid sequence, 917 residues long: Gamma-tubulin complex component 3 (917 aa).

The protein belongs to the TUBGCP family. Gamma-tubulin small complex (Gamma TuSC) is a heterotetrameric complex which contains two molecules of gamma-tubulin, and one molecule each of Dgrip84 and Dgrip91. The gamma-tubulin in this complex binds preferentially to GDP over GTP.

It localises to the cytoplasm. The protein localises to the cytoskeleton. Its subcellular location is the microtubule organizing center. The protein resides in the centrosome. It is found in the perinuclear region. This chain is Gamma-tubulin complex component 3, found in Drosophila melanogaster (Fruit fly).